Consider the following 755-residue polypeptide: Cellulose synthase-like protein B4 (755 aa).

The next 2 helical transmembrane spans lie at 24-44 (AVDL…ILHV) and 49-69 (TVWI…LLIT). Active-site residues include Asp136 and Asp461. 6 consecutive transmembrane segments (helical) span residues 533–556 (AYLY…LPAY), 569–589 (VYLG…LWEF), 615–635 (LFSV…VFIV), 674–694 (FLPG…CLVG), 702–722 (GSGL…LPFL), and 733–753 (IPFS…VLSV).

This sequence belongs to the glycosyltransferase 2 family. Plant cellulose synthase-like B subfamily.

The protein localises to the golgi apparatus membrane. In terms of biological role, thought to be a Golgi-localized beta-glycan synthase that polymerize the backbones of noncellulosic polysaccharides (hemicelluloses) of plant cell wall. In Arabidopsis thaliana (Mouse-ear cress), this protein is Cellulose synthase-like protein B4 (CSLB4).